Consider the following 671-residue polypeptide: Heat shock transcription factor hsf-1 (671 aa).

2 stretches are compositionally biased toward low complexity: residues 1–17 (MQPT…QQQQ) and 38–52 (QQAP…NHQN). The tract at residues 1 to 61 (MQPTGNQIQQ…NGAIGGKKSS (61 aa)) is disordered. A DNA-binding domain region spans residues 89-196 (LPVFLIKLWN…LLSQIKRKQS (108 aa)). The stretch at 206–240 (NEQTQQNLEVVMAEMRAMREKAKNMEDKMNKLTKE) forms a coiled coil. Disordered stretches follow at residues 329–423 (QEPF…PLTH), 437–493 (YQGA…VNNY), 526–552 (HHPT…GLSP), and 612–671 (NAPE…PNLV). Positions 370–386 (GAQSSRYSDGGATSSRE) are enriched in polar residues. Residues 439-456 (GASPASGGPSTSSSAPSG) show a composition bias toward low complexity. Polar residues-rich tracts occupy residues 474-493 (ATRQ…VNNY) and 528-552 (PTTS…GLSP).

Belongs to the HSF family. Forms homodimers and homotrimers. Component of the DHIC (ddl-1-containing hsf-1 inhibitory complex), which contains at least ddl-1, ddl-2, hsb-1 and hsf-1. Within the complex, interacts with ddl-1. Formation of the DHIC may be dependent upon the Insulin/IGF-1-like signaling (IIS) mediated pathway. Phosphorylated. Post-translationally, sumoylated. Sumoylation may inhibit transcriptional activity in response to heat shock. As to expression, expressed in intestinal cells, body wall muscle cells, and hypodermal cells, as well as many neurons in the head and tail.

It localises to the nucleus. The protein localises to the cytoplasm. Its function is as follows. Functions as a stress-inducible and DNA-binding transcription factor, playing a central role in the transcriptional activation of the heat shock response (HSR), leading to the expression of a large class of molecular chaperones, heat shock proteins (HSPs), that protect cells from cellular insult damage. Upon exposure to heat and other stress stimuli, activates gene transcription through binding to site-specific heat shock elements (HSEs) present in the promoter regions of target genes, such as the HSPs. Binds to inverted 5'-NGAAN-3' pentamer DNA sequences in HSEs. Involved in positive modulation of expression of heat shock protein hsp-16.2 in response to heat shock; may act in concert with homeodomain-interacting protein kinase hpk-1. In response to heat shock or starvation, required for the modulation of lifespan, and protection against aberrant protein aggregation proteotoxicity; may act in parallel with the Insulin/IGF-1-like signaling (IIS) mediated pathway. Plays a role in modulating autophagy, in response to a moderate and short-term heat shock, also known as a hormetic heat shock. Involved in positive modulation of ascaroside pheromone biosynthesis in response to heat shock, perhaps by directly activating transcription of peroxisomal fatty acid beta-oxidation genes. Required in modulating the response to infection by either Gram-negative or Gram-positive bacteria, perhaps acting via regulation of expression of Hsp90/daf-21 and members of the small heat shock protein (HSP20) family. May play a role downstream of the daf-16/FOXO and daf-2 signaling pathway in response to bacterial pathogens. Modulates expression of multiple microRNA genes, in both heat shock-dependent and -independent manner. Independent of heat shock, required to modulate expression of genes involved in larval development, mainly distinct from HSPs; acts in concert with putative transcription factor efl-1/E2F, which may form part of a multiprotein DRM complex. Independent of heat shock, involved in promoting death of the linker cell, a male-specific cell which guides the elongation of the gonad; perhaps acting by modulating expression of ubiquitin-conjugating enzyme let-70. Plays a role in egg-laying. The chain is Heat shock transcription factor hsf-1 from Caenorhabditis elegans.